We begin with the raw amino-acid sequence, 570 residues long: MLTDMEISRRAHLKDIAQLGAEFGLLPEEMQLFGNTKAKVDLQVQQRLAGQPKGKLIIVTAVTPTPHGEGKTVTTIGLTQSLKALGNKVCACIRQPSMGPVFGVKGGAAGGGYAQVVPMQELNLHLTGDIHAVSSAHNLGAAAIASRLYHEMRLGKAEFERQSGLSYLDIDPKGIRWHRVVDHNDRCLREIEVGLGENNGPAYTSGFDITAASELMAILALSRNLTDMRVRIGKLVLALNRQGEAVSADELGVAGAMTAIMADAVKPTLMQTLNGAPCLIHAGPFANIAHGNSSVIADDIALKLADFVVTEGGFGSDMGFEKFCNIKARQSGLIPSAAVLVTTLKALKANSGLASDTDINAPDQARLEAGFANLNWHINNVVQYGLPVVVAINRFASDTDAELNWLMEAVRGTAAFGCELSEAFSQGEDGAMALAQTVIRACEQPSEFRLLYPDNMELEAKLSTLAELGYGAAGINLSAVAKQQLQELSALGYAHLPVCMAKTPLSISHDPQLKGVPQGFIVPVRELVLNAGAGFITALVGNVMTMPGLGLTPGYLKIDIDVDGEIIGLG.

Residue Thr-65–Thr-72 participates in ATP binding.

The protein belongs to the formate--tetrahydrofolate ligase family.

The enzyme catalyses (6S)-5,6,7,8-tetrahydrofolate + formate + ATP = (6R)-10-formyltetrahydrofolate + ADP + phosphate. The protein operates within one-carbon metabolism; tetrahydrofolate interconversion. The protein is Formate--tetrahydrofolate ligase of Shewanella oneidensis (strain ATCC 700550 / JCM 31522 / CIP 106686 / LMG 19005 / NCIMB 14063 / MR-1).